The sequence spans 770 residues: Cullin-1 (770 aa).

The region spanning 700–761 (DRKLQIQAAI…EKEYLMRVEG (62 aa)) is the Cullin neddylation domain. A Glycyl lysine isopeptide (Lys-Gly) (interchain with G-Cter in NEDD8) cross-link involves residue lysine 714.

This sequence belongs to the cullin family. As to quaternary structure, part of a complex that includes culA, fbxA and regA. Formation of this complex is dependent on the MAP kinase erkB. In terms of processing, neddylated; which enhances the ubiquitination activity of SCF.

Its pathway is protein modification; protein ubiquitination. Functionally, probable core component of cullin-based SCF-like E3 ubiquitin-protein ligase complexes which mediate the ubiquitination and subsequent proteasomal degradation of target proteins. The E3 ubiquitin-protein ligase activity of the complex is dependent on the neddylation of the cullin subunit. Required at several stages during development. CulA and fbxA regulate multicellular development by targeting regA for degradation via a pathway that requires erkB function, leading to an increase in cAMP and PKA activity. In Dictyostelium discoideum (Social amoeba), this protein is Cullin-1 (culA).